Consider the following 71-residue polypeptide: Small ribosomal subunit protein bS21 (71 aa).

The protein belongs to the bacterial ribosomal protein bS21 family.

The protein is Small ribosomal subunit protein bS21 of Hahella chejuensis (strain KCTC 2396).